Here is an 820-residue protein sequence, read N- to C-terminus: Serine/threonine-protein phosphatase 4 regulatory subunit 3B (820 aa).

One can recognise a WH1 domain in the interval 1 to 100 (MSDTRRRVKV…DEIWEKICQV (100 aa)). Phosphoserine occurs at positions 117 and 663. Residues 687 to 820 (EDDDEEGKAV…SPRKRPRLGS (134 aa)) are disordered. Residues 701-732 (EKSKTEDDFPDSYEKFMETKKAKESEDKENLP) show a composition bias toward basic and acidic residues. Polar residues predominate over residues 744-789 (FSHSPSATNGTNSTNSKSVVSQTTPASSNVASSKTTSLATSVTATK). The segment covering 798 to 809 (YPDDEEEDEEEE) has biased composition (acidic residues). A Phosphoserine modification is found at serine 811.

This sequence belongs to the SMEK family. In terms of assembly, serine/threonine-protein phosphatase 4 (PP4) occurs in different assemblies of the catalytic and one or more regulatory subunits. Component of the PP4 complex PPP4C-PPP4R2-PPP4R3B.

The protein resides in the cytoplasm. Its subcellular location is the cytoskeleton. The protein localises to the microtubule organizing center. It is found in the centrosome. It localises to the nucleus. Its function is as follows. Regulatory subunit of serine/threonine-protein phosphatase 4 (PP4). May regulate the activity of PPP4C at centrosomal microtubule organizing centers. This chain is Serine/threonine-protein phosphatase 4 regulatory subunit 3B, found in Mus musculus (Mouse).